A 136-amino-acid chain; its full sequence is NADH-ubiquinone oxidoreductase chain 3 (136 aa).

3 helical membrane passes run 5–25 (TFFLFLIPVLAIILLAVNLIF), 55–75 (ISFFIFALLFLLFDLEILLVY), and 85–105 (GIYGLVIMLVFFLVGTLGFAF).

The protein belongs to the complex I subunit 3 family.

It localises to the mitochondrion membrane. It carries out the reaction a ubiquinone + NADH + 5 H(+)(in) = a ubiquinol + NAD(+) + 4 H(+)(out). Core subunit of the mitochondrial membrane respiratory chain NADH dehydrogenase (Complex I) that is believed to belong to the minimal assembly required for catalysis. Complex I functions in the transfer of electrons from NADH to the respiratory chain. The immediate electron acceptor for the enzyme is believed to be ubiquinone. This is NADH-ubiquinone oxidoreductase chain 3 (nd3) from Emericella nidulans (Aspergillus nidulans).